We begin with the raw amino-acid sequence, 365 residues long: Probable L-tyrosine/L-aspartate decarboxylase (365 aa).

Position 225 is an N6-(pyridoxal phosphate)lysine (Lys-225).

This sequence belongs to the group II decarboxylase family. MfnA subfamily. The cofactor is pyridoxal 5'-phosphate.

The enzyme catalyses L-tyrosine + H(+) = tyramine + CO2. It catalyses the reaction L-aspartate + H(+) = beta-alanine + CO2. It participates in cofactor biosynthesis; methanofuran biosynthesis. The protein operates within cofactor biosynthesis; coenzyme A biosynthesis. Catalyzes the decarboxylation of L-tyrosine to produce tyramine for methanofuran biosynthesis. Can also catalyze the decarboxylation of L-aspartate to produce beta-alanine for coenzyme A (CoA) biosynthesis. This chain is Probable L-tyrosine/L-aspartate decarboxylase, found in Methanocorpusculum labreanum (strain ATCC 43576 / DSM 4855 / Z).